Here is a 248-residue protein sequence, read N- to C-terminus: Uracil-DNA glycosylase (248 aa).

The Proton acceptor role is filled by Asp85.

The protein belongs to the uracil-DNA glycosylase (UDG) superfamily. UNG family.

Its subcellular location is the cytoplasm. The enzyme catalyses Hydrolyzes single-stranded DNA or mismatched double-stranded DNA and polynucleotides, releasing free uracil.. Its function is as follows. Excises uracil residues from the DNA which can arise as a result of misincorporation of dUMP residues by DNA polymerase or due to deamination of cytosine. In Deinococcus deserti (strain DSM 17065 / CIP 109153 / LMG 22923 / VCD115), this protein is Uracil-DNA glycosylase.